Here is a 706-residue protein sequence, read N- to C-terminus: MNESKPGDSQNLACVFCRKHDDCPNKYGEKKTKEKWNLTVHYYCLLMSSGIWQRGKEEEGVYGFLIEDIRKEVNRASKLKCCVCKKNGASIGCVAPRCKRSYHFPCGLQRECIFQFTGNFASFCWDHRPVQIITSNNYRESLPCTICLEFIEPIPSYNILRSPCCKNAWFHRDCLQVQAINAGVFFFRCTICNNSDIFQKEMLRMGIHIPEKDASWELEENAYQELLQHYERCDVRRCRCKEGRDYNAPDSKWEIKRCQCCGSSGTHLACSSLRSWEQNWECLECRGIIYNSGEFQKAKKHVLPNSNNVGITDCLLEESSPKLPRQSPGSQSKDLLRQGSKFRRNVSTLLIELGFQIKKKTKRLYINKANIWNSALDAFRNRNFNPSYAIEVAYVIENDNFGSEHPGSKQEFLSLLMQHLENSSLFEGSLSKNLSLNSQALKENLYYEAGKMLAISLVHGGPSPGFFSKTLFNCLVYGPENTQPILDDVSDFDVAQIIIRINTATTVADLKSIINECYNYLELIGCLRLITTLSDKYMLVKDILGYHVIQRVHTPFESFKQGLKTLGVLEKIQAYPEAFCSILCHKPESLSAKILSELFTVHTLPDVKALGFWNSYLQAVEDGKSTTTMEDILIFATGCSSIPPAGFKPTPSIECLHVDFPVGNKCNNCLAIPITNTYKEFQENMDFTIRNTLRLEKEESSHYIGH.

A C2HC pre-PHD-type zinc finger spans residues 11 to 51 (NLACVFCRKHDDCPNKYGEKKTKEKWNLTVHYYCLLMSSGI). A PHD-type 1 zinc finger spans residues 79-128 (LKCCVCKKNGASIGCVAPRCKRSYHFPCGLQRECIFQFTGNFASFCWDHR). The segment at 143-193 (PCTICLEFIEPIPSYNILRSPCCKNAWFHRDCLQVQAINAGVFFFRCTICN) adopts a PHD-type 2; degenerate zinc-finger fold. The PHD-type 3 zinc finger occupies 237 to 286 (RCRCKEGRDYNAPDSKWEIKRCQCCGSSGTHLACSSLRSWEQNWECLECR). One can recognise an HECT domain in the interval 371–698 (IWNSALDAFR…IRNTLRLEKE (328 aa)).

In terms of tissue distribution, predominantly expressed in brain, liver, kidney, testes and ovary.

It is found in the nucleus. Its subcellular location is the nucleolus. The protein resides in the cytoplasm. It carries out the reaction S-ubiquitinyl-[E2 ubiquitin-conjugating enzyme]-L-cysteine + [acceptor protein]-L-lysine = [E2 ubiquitin-conjugating enzyme]-L-cysteine + N(6)-ubiquitinyl-[acceptor protein]-L-lysine.. It participates in protein modification; protein ubiquitination. Its function is as follows. E3 ubiquitin-protein ligase which accepts ubiquitin from an E2 ubiquitin-conjugating enzyme in the form of a thioester and then directly transfers the ubiquitin to targeted substrates. Essential in early embryonic development to prevent apoptotic death. The protein is G2/M phase-specific E3 ubiquitin-protein ligase (G2E3) of Homo sapiens (Human).